Here is a 396-residue protein sequence, read N- to C-terminus: Phosphopentomutase (396 aa).

Mn(2+)-binding residues include D13, D288, H293, D329, H330, and H341.

Belongs to the phosphopentomutase family. Requires Mn(2+) as cofactor.

It localises to the cytoplasm. The enzyme catalyses 2-deoxy-alpha-D-ribose 1-phosphate = 2-deoxy-D-ribose 5-phosphate. It carries out the reaction alpha-D-ribose 1-phosphate = D-ribose 5-phosphate. It functions in the pathway carbohydrate degradation; 2-deoxy-D-ribose 1-phosphate degradation; D-glyceraldehyde 3-phosphate and acetaldehyde from 2-deoxy-alpha-D-ribose 1-phosphate: step 1/2. Its function is as follows. Isomerase that catalyzes the conversion of deoxy-ribose 1-phosphate (dRib-1-P) and ribose 1-phosphate (Rib-1-P) to deoxy-ribose 5-phosphate (dRib-5-P) and ribose 5-phosphate (Rib-5-P), respectively. In Clostridium beijerinckii (strain ATCC 51743 / NCIMB 8052) (Clostridium acetobutylicum), this protein is Phosphopentomutase.